Reading from the N-terminus, the 214-residue chain is NAD(P)H-quinone oxidoreductase subunit 6, chloroplastic (214 aa).

The next 5 helical transmembrane spans lie at 10–30 (FSLF…VLLP), 32–52 (ILYS…IYLL), 61–81 (AQVL…IMLV), 102–122 (IIGL…VTTP), and 163–183 (LLPF…AIVI).

It belongs to the complex I subunit 6 family. In terms of assembly, NDH is composed of at least 16 different subunits, 5 of which are encoded in the nucleus.

It is found in the plastid. The protein localises to the chloroplast thylakoid membrane. The catalysed reaction is a plastoquinone + NADH + (n+1) H(+)(in) = a plastoquinol + NAD(+) + n H(+)(out). It carries out the reaction a plastoquinone + NADPH + (n+1) H(+)(in) = a plastoquinol + NADP(+) + n H(+)(out). Functionally, NDH shuttles electrons from NAD(P)H:plastoquinone, via FMN and iron-sulfur (Fe-S) centers, to quinones in the photosynthetic chain and possibly in a chloroplast respiratory chain. The immediate electron acceptor for the enzyme in this species is believed to be plastoquinone. Couples the redox reaction to proton translocation, and thus conserves the redox energy in a proton gradient. The protein is NAD(P)H-quinone oxidoreductase subunit 6, chloroplastic (ndhG) of Chlorokybus atmophyticus (Soil alga).